The chain runs to 601 residues: DNA ligase 2 (601 aa).

Position 263 (Glu263) interacts with ATP. Lys265 serves as the catalytic N6-AMP-lysine intermediate. Residues Arg270, Arg285, Glu314, Phe354, Arg432, and Lys438 each contribute to the ATP site.

This sequence belongs to the ATP-dependent DNA ligase family. Mg(2+) is required as a cofactor.

It carries out the reaction ATP + (deoxyribonucleotide)n-3'-hydroxyl + 5'-phospho-(deoxyribonucleotide)m = (deoxyribonucleotide)n+m + AMP + diphosphate.. DNA ligase that seals nicks in double-stranded DNA during DNA replication, DNA recombination and DNA repair. This is DNA ligase 2 from Thermofilum pendens (strain DSM 2475 / Hrk 5).